Here is a 1273-residue protein sequence, read N- to C-terminus: DNA-directed RNA polymerase subunit beta (1273 aa).

It belongs to the RNA polymerase beta chain family. In terms of assembly, the RNAP catalytic core consists of 2 alpha, 1 beta, 1 beta' and 1 omega subunit. When a sigma factor is associated with the core the holoenzyme is formed, which can initiate transcription.

The catalysed reaction is RNA(n) + a ribonucleoside 5'-triphosphate = RNA(n+1) + diphosphate. In terms of biological role, DNA-dependent RNA polymerase catalyzes the transcription of DNA into RNA using the four ribonucleoside triphosphates as substrates. This is DNA-directed RNA polymerase subunit beta from Onion yellows phytoplasma (strain OY-M).